Reading from the N-terminus, the 255-residue chain is 5'-nucleotidase SurE (255 aa).

Residues Asp8, Asp9, Ser40, and Asn93 each coordinate a divalent metal cation.

The protein belongs to the SurE nucleotidase family. It depends on a divalent metal cation as a cofactor.

The protein localises to the cytoplasm. It carries out the reaction a ribonucleoside 5'-phosphate + H2O = a ribonucleoside + phosphate. Functionally, nucleotidase that shows phosphatase activity on nucleoside 5'-monophosphates. This Bradyrhizobium sp. (strain BTAi1 / ATCC BAA-1182) protein is 5'-nucleotidase SurE.